A 2284-amino-acid chain; its full sequence is MWQVPEGSQCCCTGKSFSNAEAKELRYVCSCWMSTRLVKAEAPPQQSRKSGIAPTPLKSKGTIQVSLPKATGVKPSIHKSKGASVAPAPLLKQRCEVVVQYGPPADIELVYPPLVREEEKSSNIVVLPPTQKVEVRVPVCCAPKWMVAIPKPPVKLAPKASKLRFPKGAVAYNGVNFIDTKGKVVLSEGAKRILRGIRVAAKQRLRAARRSAACKKVRAKRALAEFEAIVQSERLDQLKTGFQVVLPAPKMSCSLKEAAPSTTSVVVVKKRKLPRLPKILPEQDFSCLEGFDWGEKSHPVEVDIEDDWILVEKPVLKRQAVQTAQGRATEALTRFAATSGFSLGAHQKVEDFASSGEAEYLMAGEFADLCLLSLVYNDAPTLSATIEELRDSKDFLEAIELLKLELAEIPTDSTTCAPFKQWASAAKQMAKGVGTMVGDFTRAAGAAVVISFDMAVEFLQDKALKFCKRIFDVTMAPYLQHLASAHSILKKIWEKLSEWMESLKSKASLALEVMRQHAIFALGAMVIGGVVVLVEKVLIAAKIIPNCGIILGAFLTLFFASLGLTALECTAEEIFRMHACCKSAIYSMYSVAEPTMADEGESHTMGATQGLDNAIQALTRVGQSMISFKLGSFSYYAKIAQGFDQLARGKRAIGELTSWLIDLVGSIYSQVSGQESTFFDELSTIVCLDVRAWLLKSKRVRLQVETMAIGDRITLDTIAKLLEEGHKILVTAAGVPRKTSADFTMCIKEEVSKLEEVHARTACAGINEGMRAFPFWVYIFGASQSGKTTIANSIIIPALLEEMNLPKSSVYSRPKTGGFWSGYARQACVKVDDFYAIEQTPSLASSMIDVVNSEPYPLDMAYIHEKGMSMDSPLVVTTANTAVPPTNSQVVDLPSFYNRRAAVLEVRRKDGSFFTPRAYDSCIEVRFMHNKCPYVDSAGVPQGPAVNTPMDEGWITPSEAVAVLKNLLGEHILAEEAKLLEYRERIGNDHPIYNAAKEFIGNMHYPGQWLTAEQKSTYGIKDDGFSFLAVDGKIYKYNVLGKLNPCESEPPHPNVIPWLEKKTLEIVHWDVHKHIATGPRNALVACFLQGLVQGQSKVESVERMGKDSSPEQQNFFKRLSLSERIYLRLCQIRIDNIQKEELAGSGRGPMAILRECLMKSKQVVVENYSLLLTLVAILLLISAAYTLLSTVVALAGCSSFAGGMVAVTAVNNASIPCSEPRLEERYSPRNRFVSRISKIRGEGPSKGQGEHEELVTELYYYCDGVKKLISTCWFKGRSLLMTRHQALAVPIGNEIEVIYADGTTKKLVWPGRQEDGNCKGFVEFPENELVVFEHPHLLTLPIKYEKYFVDDADRQISPNVAVKCCVARLEDGIPQFHFWSKYATARSEVHTLKDEGGGNVYQNKIRRYIVYAHEAKKYDCGALAVAVIQGIPKVIAMLVSGNRGVTYSSVIPNYSSSFIRGEVPYVPEDGLVSRGYRKVGYLHASDAPHVPSKTSFMKVPDELCFPYPDPKQPAILSAEDERLKGTIHEGYTPLRDGMKKFAEPMYLLEEKLLDEVAGDMVQTWYDPGEFLEDISLDQAINGDMDEEYFDPLVMDTSEGYPDVLDRKPGEKGKARFFVGEPGNRAFVAGCNPEKAYYQLEEDSKTKIPSLVSIETPKDERLKRSKIDTPGTRLFSVLPLAYNLLLRVKFLSFSRLLMKKRGHLPCQVGINPYSREWTDLYHRLGELSDVGYNCDYKAFDGLITEQILSTIADMINAGYRDPVGNRQRKNLLLAICGRLSICGNQVYATEAGIPSGCALTVVLNSIFKELLMRYCFKKIVPPVYKECFDRCVVLITYGDDNVFTVAQSVMQYFTGDALKMQMAKLGVTITDGKDKSLSTIPARPLLELEFLKRGFVRSSGGMINAPLEKLSIMSSLVYIRSDGSDMLQKLLDNVNTALVELYLHGDRTYFESVRAFYFEKLPPGAYKELTTWFQAESFHECQKSGESGYKPQGLIEISHGAAFASFTQQAGTELEKHDICPGLSIAGTKYIATENEIVLSLSSVLPGDRNVFKLDLPCGDGIGRLPSKCSILNLRKPGLVMRLCKRAQDEKKTLVIRDERPYIGAWAVACICGESFGFGQQSVLALYANLLGPNQRNGLASYFSDFESPIHIKKVHAKTNSYEGGEALKEIFTFCETIFYEATEMDTRKVMLQNQPDVYPSISLVGGVCFPNEGGEPGAMYSETDVTMAREVQGVYVSEACVKCCRRCVGVATRVVTDTQLFGNNLLKTHLKALRKIQNHTCLRK.

Over 569-1171 (CTAEEIFRMH…QVVVENYSLL (603 aa)) the chain is Cytoplasmic. The SF3 helicase domain maps to 751 to 919 (VSKLEEVHAR…DGSFFTPRAY (169 aa)). 781–788 (GASQSGKT) contacts ATP. Residues 1172-1192 (LTLVAILLLISAAYTLLSTVV) form a helical membrane-spanning segment. The Lumenal segment spans residues 1193–1217 (ALAGCSSFAGGMVAVTAVNNASIPC). An O-(5'-phospho-RNA)-serine modification is found at serine 1218. The 216-residue stretch at 1243-1458 (GPSKGQGEHE…SVIPNYSSSF (216 aa)) folds into the Peptidase C3 domain. Residues histidine 1284, glutamate 1328, and cysteine 1420 each act as for picornain 3C-like protease activity in the active site. Residues 1728-1852 (DVGYNCDYKA…TVAQSVMQYF (125 aa)) enclose the RdRp catalytic domain.

In terms of processing, specific enzymatic cleavages by picornain 3C-like protease in vivo yield mature proteins. Picornain 3C-like protease is autocatalytically processed. Post-translationally, VPg is uridylylated by the polymerase and is covalently linked to the 5'-end of genomic RNA. This uridylylated form acts as a nucleotide-peptide primer for the polymerase.

The protein localises to the host endoplasmic reticulum lumen. It localises to the host endoplasmic reticulum membrane. The enzyme catalyses RNA(n) + a ribonucleoside 5'-triphosphate = RNA(n+1) + diphosphate. In terms of biological role, picornain 3C-like protease is a thiol protease that cleaves the P1 and P2 polyproteins. The protein is RNA1 polyprotein of Vitis rupestris (Grape).